The primary structure comprises 602 residues: Elongation factor 4 (602 aa).

In terms of domain architecture, tr-type G spans 2–184 (NHIRNFSIIA…LIVAKVPAPR (183 aa)). GTP is bound by residues 14–19 (DHGKST) and 131–134 (NKMD).

Belongs to the TRAFAC class translation factor GTPase superfamily. Classic translation factor GTPase family. LepA subfamily.

Its subcellular location is the cell inner membrane. The catalysed reaction is GTP + H2O = GDP + phosphate + H(+). Its function is as follows. Required for accurate and efficient protein synthesis under certain stress conditions. May act as a fidelity factor of the translation reaction, by catalyzing a one-codon backward translocation of tRNAs on improperly translocated ribosomes. Back-translocation proceeds from a post-translocation (POST) complex to a pre-translocation (PRE) complex, thus giving elongation factor G a second chance to translocate the tRNAs correctly. Binds to ribosomes in a GTP-dependent manner. The polypeptide is Elongation factor 4 (Paracidovorax citrulli (strain AAC00-1) (Acidovorax citrulli)).